The chain runs to 149 residues: Calmodulin-like protein 3 (149 aa).

4 consecutive EF-hand domains span residues 8 to 43, 44 to 79, 81 to 116, and 117 to 149; these read EQVT…LGQN, PTEA…KMKD, DNEE…LGEK, and LSDE…LVSK. Ca(2+)-binding residues include Asp-21, Asp-23, Asp-25, Cys-27, Glu-32, Asp-57, Asp-59, Asn-61, Thr-63, Glu-68, Asp-94, Asp-96, Asn-98, Glu-105, Asp-130, Asp-132, Asp-134, Gln-136, and Glu-141.

It belongs to the calmodulin family. Interacts with MYO10, the interaction is calcium-dependent and essential for MYO10 function in filopodial extension. In terms of tissue distribution, expressed in normal mammary, prostate, cervical, and epidermal tissues. It is greatly reduced or undetectable in transformed cells.

Functionally, may function as a specific light chain of unconventional myosin-10 (MYO10), also enhances MYO10 translation, possibly by acting as a chaperone for the emerging MYO10 heavy chain protein. May compete with calmodulin by binding, with different affinities, to cellular substrates. The sequence is that of Calmodulin-like protein 3 (CALML3) from Homo sapiens (Human).